Consider the following 164-residue polypeptide: HTH-type transcriptional regulator PapX (164 aa).

An HTH marR-type domain is found at 25 to 159 (EHLLMQLCIR…FEVISKKLLA (135 aa)).

It is found in the cytoplasm. The polypeptide is HTH-type transcriptional regulator PapX (papX) (Escherichia coli).